A 256-amino-acid polypeptide reads, in one-letter code: UPF0259 membrane protein YPO2199/y2042/YP_1997 (256 aa).

Transmembrane regions (helical) follow at residues 20–40, 90–110, 118–138, 141–161, 192–212, and 221–241; these read IAAILLLALLTAFITVMLNQT, FSALVGNVLLVGGLLTLIAMV, ALQAIGLSLPILPRLLVLMFI, LVIQLGLTFFIVPGVAIAIAL, LIVPAMMLWIAVKLLLLFLIS, and IATIVLSTLSNLASALLLVYL.

This sequence belongs to the UPF0259 family.

The protein localises to the cell inner membrane. The protein is UPF0259 membrane protein YPO2199/y2042/YP_1997 of Yersinia pestis.